The chain runs to 334 residues: Formamidase (334 aa).

The CN hydrolase domain occupies 14 to 260; that stretch reads FLVAAIQFPV…WEIVTGEIYP (247 aa). Catalysis depends on E60, which acts as the Proton acceptor. Catalysis depends on K133, which acts as the Proton donor. The active-site Nucleophile is C166.

It belongs to the carbon-nitrogen hydrolase superfamily. Aliphatic amidase family.

The catalysed reaction is formamide + H2O = formate + NH4(+). Its function is as follows. Is an aliphatic amidase with a restricted substrate specificity, as it only hydrolyzes formamide. This Helicobacter acinonychis (strain Sheeba) protein is Formamidase.